The following is a 535-amino-acid chain: Dual specificity calcium/calmodulin-dependent 3',5'-cyclic nucleotide phosphodiesterase 1A (535 aa).

Calmodulin-binding stretches follow at residues 24 to 44 (TEKM…QLER) and 114 to 137 (EKPK…MYRK). The region spanning 142-522 (VGLAYPAAVI…ERWKELAAQE (381 aa)) is the PDEase domain. His219 acts as the Proton donor in catalysis. Zn(2+)-binding residues include His223, His259, Asp260, and Asp366. A Mg(2+)-binding site is contributed by Asp260.

It belongs to the cyclic nucleotide phosphodiesterase family. PDE1 subfamily. Homodimer. Interacts with YWHAZ. Zn(2+) is required as a cofactor. Mg(2+) serves as cofactor. In terms of tissue distribution, several tissues, including brain, kidney, testes and heart.

It catalyses the reaction a nucleoside 3',5'-cyclic phosphate + H2O = a nucleoside 5'-phosphate + H(+). It carries out the reaction 3',5'-cyclic GMP + H2O = GMP + H(+). The catalysed reaction is 3',5'-cyclic AMP + H2O = AMP + H(+). With respect to regulation, type I PDE are activated by the binding of calmodulin in the presence of Ca(2+). Calcium/calmodulin-dependent cyclic nucleotide phosphodiesterase with a dual specificity for the second messengers cGMP and cAMP, which are key regulators of many important physiological processes. Has a higher efficiency with cGMP compared to cAMP. The chain is Dual specificity calcium/calmodulin-dependent 3',5'-cyclic nucleotide phosphodiesterase 1A from Homo sapiens (Human).